The following is a 202-amino-acid chain: Recombination protein RecR (202 aa).

The segment at 61–76 (CARCNSFTEDDVCVIC) adopts a C4-type zinc-finger fold. Positions 84 to 179 (SLLCIVETPA…KVTRLARGVP (96 aa)) constitute a Toprim domain.

This sequence belongs to the RecR family.

May play a role in DNA repair. It seems to be involved in an RecBC-independent recombinational process of DNA repair. It may act with RecF and RecO. The sequence is that of Recombination protein RecR from Bordetella avium (strain 197N).